The sequence spans 356 residues: Phospho-2-dehydro-3-deoxyheptonate aldolase, Tyr-sensitive (356 aa).

Belongs to the class-I DAHP synthase family.

The catalysed reaction is D-erythrose 4-phosphate + phosphoenolpyruvate + H2O = 7-phospho-2-dehydro-3-deoxy-D-arabino-heptonate + phosphate. It participates in metabolic intermediate biosynthesis; chorismate biosynthesis; chorismate from D-erythrose 4-phosphate and phosphoenolpyruvate: step 1/7. Stereospecific condensation of phosphoenolpyruvate (PEP) and D-erythrose-4-phosphate (E4P) giving rise to 3-deoxy-D-arabino-heptulosonate-7-phosphate (DAHP). In Salmonella typhi, this protein is Phospho-2-dehydro-3-deoxyheptonate aldolase, Tyr-sensitive (aroF).